The sequence spans 84 residues: Small ribosomal subunit protein bS16 (84 aa).

This sequence belongs to the bacterial ribosomal protein bS16 family.

The sequence is that of Small ribosomal subunit protein bS16 from Burkholderia mallei (strain NCTC 10247).